We begin with the raw amino-acid sequence, 78 residues long: Large ribosomal subunit protein bL28 (78 aa).

Belongs to the bacterial ribosomal protein bL28 family.

This Synechococcus sp. (strain WH7803) protein is Large ribosomal subunit protein bL28.